A 407-amino-acid chain; its full sequence is 4-hydroxy-3-methylbut-2-en-1-yl diphosphate synthase (ferredoxin) (407 aa).

[4Fe-4S] cluster is bound by residues C312, C315, C346, and E353.

The protein belongs to the IspG family. The cofactor is [4Fe-4S] cluster.

The enzyme catalyses (2E)-4-hydroxy-3-methylbut-2-enyl diphosphate + 2 oxidized [2Fe-2S]-[ferredoxin] + H2O = 2-C-methyl-D-erythritol 2,4-cyclic diphosphate + 2 reduced [2Fe-2S]-[ferredoxin] + H(+). Its pathway is isoprenoid biosynthesis; isopentenyl diphosphate biosynthesis via DXP pathway; isopentenyl diphosphate from 1-deoxy-D-xylulose 5-phosphate: step 5/6. Its function is as follows. Converts 2C-methyl-D-erythritol 2,4-cyclodiphosphate (ME-2,4cPP) into 1-hydroxy-2-methyl-2-(E)-butenyl 4-diphosphate. This is 4-hydroxy-3-methylbut-2-en-1-yl diphosphate synthase (ferredoxin) from Synechococcus elongatus (strain ATCC 33912 / PCC 7942 / FACHB-805) (Anacystis nidulans R2).